A 122-amino-acid polypeptide reads, in one-letter code: Small ribosomal subunit protein uS13 (122 aa).

The interval 98–122 is disordered; sequence VRGQRTHTNARTRKGPAKAIAGKKK.

The protein belongs to the universal ribosomal protein uS13 family. In terms of assembly, part of the 30S ribosomal subunit. Forms a loose heterodimer with protein S19. Forms two bridges to the 50S subunit in the 70S ribosome.

Located at the top of the head of the 30S subunit, it contacts several helices of the 16S rRNA. In the 70S ribosome it contacts the 23S rRNA (bridge B1a) and protein L5 of the 50S subunit (bridge B1b), connecting the 2 subunits; these bridges are implicated in subunit movement. Contacts the tRNAs in the A and P-sites. The sequence is that of Small ribosomal subunit protein uS13 from Jannaschia sp. (strain CCS1).